The sequence spans 281 residues: Fructose-bisphosphate aldolase class 1 (281 aa).

The active-site Schiff-base intermediate with dihydroxyacetone-P is Lys191.

The protein belongs to the DeoC/FbaB aldolase family. Homooctamer.

The protein resides in the cytoplasm. It localises to the chromosome. It catalyses the reaction beta-D-fructose 1,6-bisphosphate = D-glyceraldehyde 3-phosphate + dihydroxyacetone phosphate. With respect to regulation, activated by citrate. The chain is Fructose-bisphosphate aldolase class 1 (fba) from Thermococcus kodakarensis (strain ATCC BAA-918 / JCM 12380 / KOD1) (Pyrococcus kodakaraensis (strain KOD1)).